We begin with the raw amino-acid sequence, 115 residues long: Phosphoribosyl-ATP pyrophosphatase (115 aa).

It belongs to the PRA-PH family.

The protein resides in the cytoplasm. The catalysed reaction is 1-(5-phospho-beta-D-ribosyl)-ATP + H2O = 1-(5-phospho-beta-D-ribosyl)-5'-AMP + diphosphate + H(+). Its pathway is amino-acid biosynthesis; L-histidine biosynthesis; L-histidine from 5-phospho-alpha-D-ribose 1-diphosphate: step 2/9. The chain is Phosphoribosyl-ATP pyrophosphatase from Saccharophagus degradans (strain 2-40 / ATCC 43961 / DSM 17024).